Reading from the N-terminus, the 196-residue chain is MTPEEVLEEFRSAGALLQGHFILSSGLRSPTFLQKMTIFSDPARTERLCRALAEVITARFGRIDIVVSPAIGGIIPGYETARHLGAKAIFVERDPGGPFTLRRGFSIPAGTRAVIVEDIVTTGLSARECLASLKDEAGEVVGAACLIDRSGGRGAIGLPLLSLVTLDIPTYAPDALPAELAAIPPVKPGSRALPKP.

117–125 is a binding site for 5-phospho-alpha-D-ribose 1-diphosphate; that stretch reads EDIVTTGLS. Thr-121 and Arg-149 together coordinate orotate.

This sequence belongs to the purine/pyrimidine phosphoribosyltransferase family. PyrE subfamily. In terms of assembly, homodimer. The cofactor is Mg(2+).

It carries out the reaction orotidine 5'-phosphate + diphosphate = orotate + 5-phospho-alpha-D-ribose 1-diphosphate. It functions in the pathway pyrimidine metabolism; UMP biosynthesis via de novo pathway; UMP from orotate: step 1/2. Its function is as follows. Catalyzes the transfer of a ribosyl phosphate group from 5-phosphoribose 1-diphosphate to orotate, leading to the formation of orotidine monophosphate (OMP). In Methylorubrum extorquens (strain PA1) (Methylobacterium extorquens), this protein is Orotate phosphoribosyltransferase.